The following is a 572-amino-acid chain: Terminal nucleotidyltransferase 4B (572 aa).

Positions 1–105 are disordered; sequence MYRSGERLLG…ADGGGVVYSG (105 aa). Positions 25 to 34 are enriched in polar residues; that stretch reads ETTNNNNNHH. Residues 36 to 76 are compositionally biased toward low complexity; the sequence is PGAWARRAGSSASSPPSASSSPHPSAAVPAADPADSASGSS. Residues 89–102 are compositionally biased toward gly residues; sequence RAAGGGRADGGGVV. Residue Val-151 forms a Glycyl lysine isopeptide (Lys-Gly) (interchain with G-Cter in SUMO2) linkage. Mg(2+) is bound by residues Asp-177 and Asp-179. The ATP site is built by Gly-240, Lys-265, Ser-283, Tyr-284, Asn-368, and Arg-372. One can recognise a PAP-associated domain in the interval 308 to 368; sequence NYGVLLIEFF…YIEDPLQPGN (61 aa). The tract at residues 435 to 572 is disordered; the sequence is KNRPEPSCNG…RDAPLSDLCR (138 aa). The span at 446–464 shows a compositional bias: low complexity; that stretch reads VSSSSATQSSSSDVDSDAT. Lys-470 participates in a covalent cross-link: Glycyl lysine isopeptide (Lys-Gly) (interchain with G-Cter in SUMO2). Polar residues predominate over residues 477 to 494; sequence STGNRVGSQDVSLESSQA. Residue Ser-484 is modified to Phosphoserine. Residues Lys-497, Lys-512, and Lys-526 each participate in a glycyl lysine isopeptide (Lys-Gly) (interchain with G-Cter in SUMO2) cross-link. Residues 499-514 are compositionally biased toward low complexity; sequence QSTQTTNTSNSTNKSQ. A compositionally biased stretch (polar residues) spans 522-553; that stretch reads RSSSKGFQGTTQTSHGSLMTNKQHQGKSNNQY. A Basic, involved in binding of the RNA primer motif is present at residues 557 to 563; it reads KKRKHKR.

It belongs to the DNA polymerase type-B-like family. In terms of assembly, component of a nucleolar TRAMP-like complex, an ATP-dependent exosome regulatory complex consisting of a helicase (MTREX), an oligadenylate polymerase (TENT4B or TENT4A), and a substrate specific RNA-binding factor (ZCCHC7 or ZCCHC8). Several TRAMP-like complexes exist with specific compositions and are associated with nuclear, or nucleolar RNA exosomes. Interacts with CPEB1; the interaction is required for TENT4B-mediated translational control. Mg(2+) serves as cofactor. Mn(2+) is required as a cofactor.

The protein localises to the nucleus. Its subcellular location is the nucleolus. The protein resides in the cytoplasm. It catalyses the reaction RNA(n) + ATP = RNA(n)-3'-adenine ribonucleotide + diphosphate. Functionally, terminal nucleotidyltransferase that catalyzes preferentially the transfer of ATP and GTP on RNA 3' poly(A) tail creating a heterogeneous 3' poly(A) tail leading to mRNAs stabilization by protecting mRNAs from active deadenylation. Also functions as a catalytic subunit of a TRAMP-like complex which has a poly(A) RNA polymerase activity and is involved in a post-transcriptional quality control mechanism. Polyadenylation with short oligo(A) tails is required for the degradative activity of the exosome on several of its nuclear RNA substrates. Doesn't need a cofactor for polyadenylation activity (in vitro). Required for cytoplasmic polyadenylation of mRNAs involved in carbohydrate metabolism, including the glucose transporter SLC2A1/GLUT1. Plays a role in replication-dependent histone mRNA degradation, probably through terminal uridylation of mature histone mRNAs. May play a role in sister chromatid cohesion. Mediates 3' adenylation of the microRNA MIR21 followed by its 3'-to-5' trimming by the exoribonuclease PARN leading to degradation. Mediates 3' adenylation of H/ACA box snoRNAs (small nucleolar RNAs) followed by its 3'-to-5' trimming by the exoribonuclease PARN which enhances snoRNA stability and maturation. The protein is Terminal nucleotidyltransferase 4B of Homo sapiens (Human).